The primary structure comprises 105 residues: UPF0148 protein PYRAB12700 (105 aa).

It belongs to the UPF0148 family.

The chain is UPF0148 protein PYRAB12700 from Pyrococcus abyssi (strain GE5 / Orsay).